The sequence spans 33 residues: Photosystem II reaction center protein Psb30 (33 aa).

A helical transmembrane segment spans residues Val5–Ser25.

This sequence belongs to the Psb30/Ycf12 family. As to quaternary structure, PSII is composed of 1 copy each of membrane proteins PsbA, PsbB, PsbC, PsbD, PsbE, PsbF, PsbH, PsbI, PsbJ, PsbK, PsbL, PsbM, PsbT, PsbX, PsbY, PsbZ, Psb30/Ycf12, peripheral proteins of the oxygen-evolving complex and a large number of cofactors. It forms dimeric complexes.

It is found in the plastid membrane. Functionally, a core subunit of photosystem II (PSII), probably helps stabilize the reaction center. This chain is Photosystem II reaction center protein Psb30, found in Aneura mirabilis (Parasitic liverwort).